The sequence spans 397 residues: Subtilisin-like protease 3 (397 aa).

A signal peptide spans Met1–Ala19. Positions Arg20 to Ala116 are excised as a propeptide. The region spanning Ser35–Ala116 is the Inhibitor I9 domain. A Peptidase S8 domain is found at Thr126–Arg397. Catalysis depends on charge relay system residues Asp158 and His189. Asn250 is a glycosylation site (N-linked (GlcNAc...) asparagine). Ser344 (charge relay system) is an active-site residue. An N-linked (GlcNAc...) asparagine glycan is attached at Asn393.

The protein belongs to the peptidase S8 family.

It is found in the secreted. Secreted subtilisin-like serine protease with keratinolytic activity that contributes to pathogenicity. This chain is Subtilisin-like protease 3 (SUB3), found in Arthroderma otae (strain ATCC MYA-4605 / CBS 113480) (Microsporum canis).